We begin with the raw amino-acid sequence, 406 residues long: Renin (406 aa).

The signal sequence occupies residues 1–23 (MDGWRRMPRWGLLLLLWGSCTFG). Residues 24 to 66 (LPTDTTTFKRIFLKRMPSIRESLKERGVDMARLGPEWSQPMKR) constitute a propeptide, activation peptide. Asparagine 71 carries an N-linked (GlcNAc...) asparagine glycan. Residues 86-403 (YYGEIGIGTP…DRRNNRIGFA (318 aa)) form the Peptidase A1 domain. Residue aspartate 104 is part of the active site. Residues cysteine 117 and cysteine 124 are joined by a disulfide bond. A glycan (N-linked (GlcNAc...) asparagine) is linked at asparagine 141. Residues cysteine 283 and cysteine 287 are joined by a disulfide bond. Residue aspartate 292 is part of the active site. Cysteine 325 and cysteine 362 form a disulfide bridge.

It belongs to the peptidase A1 family. In terms of assembly, interacts with ATP6AP2.

The protein resides in the secreted. The protein localises to the membrane. It carries out the reaction Cleavage of Leu-|-Xaa bond in angiotensinogen to generate angiotensin I.. Interaction with ATP6AP2 results in a 5-fold increased efficiency in angiotensinogen processing. Functionally, renin is a highly specific endopeptidase, whose only known function is to generate angiotensin I from angiotensinogen in the plasma, initiating a cascade of reactions that produce an elevation of blood pressure and increased sodium retention by the kidney. In Macaca fascicularis (Crab-eating macaque), this protein is Renin (REN).